The primary structure comprises 108 residues: ATP-dependent Clp protease adapter protein ClpS (108 aa).

It belongs to the ClpS family. In terms of assembly, binds to the N-terminal domain of the chaperone ClpA.

Its function is as follows. Involved in the modulation of the specificity of the ClpAP-mediated ATP-dependent protein degradation. In Cupriavidus necator (strain ATCC 17699 / DSM 428 / KCTC 22496 / NCIMB 10442 / H16 / Stanier 337) (Ralstonia eutropha), this protein is ATP-dependent Clp protease adapter protein ClpS.